We begin with the raw amino-acid sequence, 201 residues long: dTTP/UTP pyrophosphatase (201 aa).

The active-site Proton acceptor is aspartate 75.

The protein belongs to the Maf family. YhdE subfamily. A divalent metal cation is required as a cofactor.

The protein resides in the cytoplasm. The catalysed reaction is dTTP + H2O = dTMP + diphosphate + H(+). It carries out the reaction UTP + H2O = UMP + diphosphate + H(+). Functionally, nucleoside triphosphate pyrophosphatase that hydrolyzes dTTP and UTP. May have a dual role in cell division arrest and in preventing the incorporation of modified nucleotides into cellular nucleic acids. The polypeptide is dTTP/UTP pyrophosphatase (Pseudomonas fluorescens (strain ATCC BAA-477 / NRRL B-23932 / Pf-5)).